A 540-amino-acid polypeptide reads, in one-letter code: Putative BTB/POZ domain-containing protein R224 (540 aa).

The 73-residue stretch at 16–88 (TDLELTLIDE…FYKNPIKYKN (73 aa)) folds into the BTB domain. The chain crosses the membrane as a helical span at residues 356 to 376 (IFVSLLNDIIFVLSSINMYFI).

Belongs to the mimivirus BTB/WD family.

The protein localises to the membrane. This chain is Putative BTB/POZ domain-containing protein R224, found in Acanthamoeba polyphaga (Amoeba).